The chain runs to 125 residues: Apoptosis inhibitor Rv3655c (125 aa).

The signal sequence occupies residues 1-33 (MEAALAIATLVLVLVLCLAGVTAVSMQVRCIDA).

As to quaternary structure, interacts with human E3 ubiquitin-protein ligase RNF213.

It localises to the secreted. The protein resides in the host cytoplasm. Effector protein that participates in the suppression of macrophage apoptosis by blocking the extrinsic pathway. Interferes with caspase-8 activation and binds to the host E3 ubiquitin-protein ligase RNF213, whose fusion partners have anti-apoptotic function. The polypeptide is Apoptosis inhibitor Rv3655c (Mycobacterium tuberculosis (strain ATCC 25618 / H37Rv)).